A 198-amino-acid polypeptide reads, in one-letter code: Dual specificity protein phosphatase 13B (198 aa).

Residues 45–193 (HIDEVWPSLF…LQVLDNRLGR (149 aa)) enclose the Tyrosine-protein phosphatase domain. Cysteine 138 serves as the catalytic Phosphocysteine intermediate.

It belongs to the protein-tyrosine phosphatase family. Non-receptor class dual specificity subfamily. Highly expressed in the testis (at protein level). Also found in the skeletal muscle.

It catalyses the reaction O-phospho-L-tyrosyl-[protein] + H2O = L-tyrosyl-[protein] + phosphate. It carries out the reaction O-phospho-L-seryl-[protein] + H2O = L-seryl-[protein] + phosphate. The catalysed reaction is O-phospho-L-threonyl-[protein] + H2O = L-threonyl-[protein] + phosphate. Dual specificity phosphatase that dephosphorylates MAPK8/JNK and MAPK14/p38, but not MAPK1/ERK2, in vitro. Exhibits intrinsic phosphatase activity towards both phospho-seryl/threonyl and -tyrosyl residues, with similar specific activities in vitro. The chain is Dual specificity protein phosphatase 13B from Homo sapiens (Human).